Reading from the N-terminus, the 85-residue chain is Cell division topological specificity factor (85 aa).

Belongs to the MinE family.

Prevents the cell division inhibition by proteins MinC and MinD at internal division sites while permitting inhibition at polar sites. This ensures cell division at the proper site by restricting the formation of a division septum at the midpoint of the long axis of the cell. This Thioalkalivibrio sulfidiphilus (strain HL-EbGR7) protein is Cell division topological specificity factor.